The sequence spans 65 residues: Large ribosomal subunit protein bL35 (65 aa).

This sequence belongs to the bacterial ribosomal protein bL35 family.

This chain is Large ribosomal subunit protein bL35, found in Buchnera aphidicola subsp. Acyrthosiphon pisum (strain 5A).